The following is a 675-amino-acid chain: UvrABC system protein B (675 aa).

In terms of domain architecture, Helicase ATP-binding spans 32–417 (EGLSDGLAYQ…EHAGQVVEQV (386 aa)). 45–52 (GVTGSGKT) provides a ligand contact to ATP. The short motif at 98 to 121 (YYDYYQPEAYVPSRDLFIEKDSAI) is the Beta-hairpin element. In terms of domain architecture, Helicase C-terminal spans 436–602 (QVDDLMSEIN…QIKKQVKDII (167 aa)). One can recognise a UVR domain in the interval 634-669 (IKEIAKLEKAMQQAARDLQFEEAAVLRDRIRNIKEN).

It belongs to the UvrB family. Forms a heterotetramer with UvrA during the search for lesions. Interacts with UvrC in an incision complex.

Its subcellular location is the cytoplasm. The UvrABC repair system catalyzes the recognition and processing of DNA lesions. A damage recognition complex composed of 2 UvrA and 2 UvrB subunits scans DNA for abnormalities. Upon binding of the UvrA(2)B(2) complex to a putative damaged site, the DNA wraps around one UvrB monomer. DNA wrap is dependent on ATP binding by UvrB and probably causes local melting of the DNA helix, facilitating insertion of UvrB beta-hairpin between the DNA strands. Then UvrB probes one DNA strand for the presence of a lesion. If a lesion is found the UvrA subunits dissociate and the UvrB-DNA preincision complex is formed. This complex is subsequently bound by UvrC and the second UvrB is released. If no lesion is found, the DNA wraps around the other UvrB subunit that will check the other stand for damage. This is UvrABC system protein B from Neisseria gonorrhoeae.